A 151-amino-acid polypeptide reads, in one-letter code: UPF0208 membrane protein YfbV (151 aa).

Residues methionine 1–arginine 45 are Cytoplasmic-facing. A helical membrane pass occupies residues tyrosine 46 to leucine 65. The Periplasmic segment spans residues glycine 66–glutamine 68. Residues leucine 69–glycine 91 form a helical membrane-spanning segment. Topologically, residues lysine 92 to leucine 151 are cytoplasmic.

It belongs to the UPF0208 family.

It localises to the cell inner membrane. The protein is UPF0208 membrane protein YfbV (yfbV) of Salmonella typhi.